The sequence spans 109 residues: Major allergen I polypeptide chain 2 (109 aa).

A signal peptide spans 1–17; the sequence is MRGALLVLALLVTQALG. A glycan (N-linked (GlcNAc...) asparagine) is linked at Asn-50.

The protein belongs to the secretoglobin family. Heterotetramer composed of two non-covalently linked disulfide-linked heterodimer of chains 1 and 2. In terms of tissue distribution, the long form is preferentially expressed in the salivary gland, while the short form is preferentially expressed in the skin.

The protein resides in the secreted. This is Major allergen I polypeptide chain 2 (CH2) from Felis catus (Cat).